The following is a 684-amino-acid chain: Glycine--tRNA ligase beta subunit (684 aa).

Belongs to the class-II aminoacyl-tRNA synthetase family. As to quaternary structure, tetramer of two alpha and two beta subunits.

The protein localises to the cytoplasm. The enzyme catalyses tRNA(Gly) + glycine + ATP = glycyl-tRNA(Gly) + AMP + diphosphate. The chain is Glycine--tRNA ligase beta subunit from Pseudomonas aeruginosa (strain LESB58).